The sequence spans 247 residues: tRNA uridine(34) hydroxylase (247 aa).

In terms of domain architecture, Rhodanese spans 124-218 (TQQDVIVIDT…YLEDTQNKNN (95 aa)). Cys178 functions as the Cysteine persulfide intermediate in the catalytic mechanism.

It belongs to the TrhO family.

It carries out the reaction uridine(34) in tRNA + AH2 + O2 = 5-hydroxyuridine(34) in tRNA + A + H2O. In terms of biological role, catalyzes oxygen-dependent 5-hydroxyuridine (ho5U) modification at position 34 in tRNAs. The chain is tRNA uridine(34) hydroxylase from Rickettsia conorii (strain ATCC VR-613 / Malish 7).